The sequence spans 412 residues: LL-diaminopimelate aminotransferase (412 aa).

Residues tyrosine 15 and glycine 42 each contribute to the substrate site. Pyridoxal 5'-phosphate is bound by residues tyrosine 72, 108–109 (SK), tyrosine 132, asparagine 187, tyrosine 218, and 246–248 (SFS). Substrate-binding residues include lysine 109, tyrosine 132, and asparagine 187. An N6-(pyridoxal phosphate)lysine modification is found at lysine 249. Pyridoxal 5'-phosphate-binding residues include arginine 257 and asparagine 292. Residues asparagine 292 and arginine 388 each contribute to the substrate site.

Belongs to the class-I pyridoxal-phosphate-dependent aminotransferase family. LL-diaminopimelate aminotransferase subfamily. Homodimer. Pyridoxal 5'-phosphate is required as a cofactor.

The enzyme catalyses (2S,6S)-2,6-diaminopimelate + 2-oxoglutarate = (S)-2,3,4,5-tetrahydrodipicolinate + L-glutamate + H2O + H(+). It functions in the pathway amino-acid biosynthesis; L-lysine biosynthesis via DAP pathway; LL-2,6-diaminopimelate from (S)-tetrahydrodipicolinate (aminotransferase route): step 1/1. Its function is as follows. Involved in the synthesis of meso-diaminopimelate (m-DAP or DL-DAP), required for both lysine and peptidoglycan biosynthesis. Catalyzes the direct conversion of tetrahydrodipicolinate to LL-diaminopimelate. The protein is LL-diaminopimelate aminotransferase of Synechocystis sp. (strain ATCC 27184 / PCC 6803 / Kazusa).